A 394-amino-acid chain; its full sequence is Probable fatty acid methyltransferase (394 aa).

S-adenosyl-L-methionine is bound by residues 128–129 (YS), 163–171 (LLDVGCGWG), and 189–194 (TLSKEQ). Residue Cys358 is part of the active site.

Belongs to the CFA/CMAS family.

This Pseudomonas putida (Arthrobacter siderocapsulatus) protein is Probable fatty acid methyltransferase.